A 213-amino-acid chain; its full sequence is Putative manganese efflux pump MntP (213 aa).

6 consecutive transmembrane segments (helical) span residues 3–23 (ILSI…VSVA), 36–56 (ALKV…IGWG), 67–87 (AFDH…MIFE), 130–150 (LAIA…FLGI), 152–172 (IVQT…LGVI), and 187–207 (IVGG…HTGI).

Belongs to the MntP (TC 9.B.29) family.

It localises to the cell membrane. Probably functions as a manganese efflux pump. The protein is Putative manganese efflux pump MntP of Clostridium perfringens (strain ATCC 13124 / DSM 756 / JCM 1290 / NCIMB 6125 / NCTC 8237 / Type A).